The sequence spans 604 residues: Prostaglandin G/H synthase 2 (604 aa).

The N-terminal stretch at 1–17 is a signal peptide; it reads MLARALLLCAAVALSHA. The EGF-like domain occupies 18 to 55; the sequence is ANPCCSNPCQNRGVCMTMGFDQYKCDCTRTGFYGENCS. 4 disulfides stabilise this stretch: C21/C32, C22/C145, C26/C42, and C44/C54. An N-linked (GlcNAc...) asparagine glycan is attached at N53. Residue R106 coordinates substrate. N-linked (GlcNAc...) asparagine glycosylation occurs at N130. The active-site Proton acceptor is the H193. Residue Y341 participates in substrate binding. Y371 acts as the For cyclooxygenase activity in catalysis. H374 is a heme b binding site. N396 is a glycosylation site (N-linked (GlcNAc...) asparagine). C526 is subject to S-nitrosocysteine. A disulfide bond links C555 and C561. S565 is subject to O-acetylserine. N580 carries an N-linked (GlcNAc...) asparagine glycan.

This sequence belongs to the prostaglandin G/H synthase family. As to quaternary structure, homodimer. Requires heme b as cofactor. In terms of processing, S-nitrosylation by NOS2 (iNOS) activates enzyme activity. S-nitrosylation may take place on different Cys residues in addition to Cys-526. Acetylated at Ser-565 by SPHK1. During neuroinflammation, acetylation by SPHK1 promotes neuronal secretion of specialized preresolving mediators (SPMs), especially 15-R-lipoxin A4, which results in an increase of phagocytic microglia. In terms of tissue distribution, highest expression in kidney and urinary bladder.

The protein resides in the microsome membrane. It is found in the endoplasmic reticulum membrane. Its subcellular location is the nucleus inner membrane. The protein localises to the nucleus outer membrane. It catalyses the reaction (5Z,8Z,11Z,14Z)-eicosatetraenoate + AH2 + 2 O2 = prostaglandin H2 + A + H2O. The enzyme catalyses (5Z,8Z,11Z,14Z)-eicosatetraenoate + 2 O2 = prostaglandin G2. It carries out the reaction prostaglandin G2 + AH2 = prostaglandin H2 + A + H2O. The catalysed reaction is (5Z,8Z,11Z,14Z,17Z)-eicosapentaenoate + 2 O2 = prostaglandin G3. It catalyses the reaction prostaglandin G3 + AH2 = prostaglandin H3 + A + H2O. The enzyme catalyses (8Z,11Z,14Z)-eicosatrienoate + 2 O2 = prostaglandin G1. It carries out the reaction prostaglandin G1 + AH2 = prostaglandin H1 + A + H2O. The catalysed reaction is 2-(5Z,8Z,11Z,14Z)-eicosatetraenoyl-sn-glycero-3-phosphoethanolamine + 2 O2 = 2-(prostaglandin G2)-sn-glycero-3-phosphoethanolamine. It catalyses the reaction 2-(prostaglandin G2)-sn-glycero-3-phosphoethanolamine + AH2 = 2-(prostaglandin H2)-sn-glycero-3-phosphoethanolamine + A + H2O. The enzyme catalyses 2-(5Z,8Z,11Z,14Z)-eicosatetraenoyl-sn-glycero-3-phosphocholine + 2 O2 = 2-(prostaglandin G2)-sn-glycero-3-phosphocholine. It carries out the reaction 2-(prostaglandin G2)-sn-glycero-3-phosphocholine + AH2 = 2-(prostaglandin H2)-sn-glycero-3-phosphocholine + A + H2O. The catalysed reaction is (15S)-hydroperoxy-(5Z,8Z,11Z,13E)-eicosatetraenoate + AH2 = (15S)-hydroxy-(5Z,8Z,11Z,13E)-eicosatetraenoate + A + H2O. It catalyses the reaction 2-(5Z,8Z,11Z,14Z)-eicosatetraenoyl-sn-glycero-3-phosphocholine + AH2 + O2 = 2-[(15S)-hydroxy-(5Z,8Z,11Z,13E)-eicosatetraenoyl]-sn-glycero-3-phosphocholine + A + H2O. The enzyme catalyses 2-(5Z,8Z,11Z,14Z)-eicosatetraenoyl-sn-glycero-3-phosphocholine + AH2 + O2 = 2-[(15R)-hydroxy-(5Z,8Z,11Z,13E)-eicosatetraenoyl]-sn-glycero-3-phosphocholine + A + H2O. It carries out the reaction 2-(5Z,8Z,11Z,14Z)-eicosatetraenoyl-sn-glycero-3-phosphocholine + AH2 + O2 = 2-[(11R)-hydroxy-(5Z,8Z,12E,14Z)-eicosatetraenoyl]-sn-glycero-3-phosphocholine + A + H2O. The catalysed reaction is (9Z,12Z)-octadecadienoate + AH2 + O2 = 9-hydroxy-(10E,12Z)-octadecadienoate + A + H2O. It catalyses the reaction (9Z,12Z)-octadecadienoate + AH2 + O2 = 13-hydroxy-(9Z,11E)-octadecadienoate + A + H2O. The enzyme catalyses (5Z,8Z,11Z,14Z)-eicosatetraenoate + AH2 + O2 = (15R)-hydroxy-(5Z,8Z,11Z,13E)-eicosatetraenoate + A + H2O. It carries out the reaction (5Z,8Z,11Z,14Z)-eicosatetraenoate + AH2 + O2 = (11R)-hydroxy-(5Z,8Z,12E,14Z)-eicosatetraenoate + A + H2O. The catalysed reaction is (5Z,8Z,11Z,14Z,17Z)-eicosapentaenoate + AH2 + O2 = (11R)-hydroxy-(5Z,8Z,12E,14Z,17Z)-eicosapentaenoate + A + H2O. It catalyses the reaction (5Z,8Z,11Z,14Z,17Z)-eicosapentaenoate + AH2 + O2 = (18S)-hydroxy-(5Z,8Z,11Z,14Z,16E)-eicosapentaenoate + A + H2O. The enzyme catalyses (5Z,8Z,11Z,14Z,17Z)-eicosapentaenoate + AH2 + O2 = (18R)-hydroxy-(5Z,8Z,11Z,14Z,16E)-eicosapentaenoate + A + H2O. It carries out the reaction (5Z,8Z,11Z,14Z,17Z)-eicosapentaenoate + AH2 + O2 = (15R)-hydroxy-(5Z,8Z,11Z,13E,17Z)-eicosapentaenoate + A + H2O. The catalysed reaction is (5Z,8Z,11Z,14Z,17Z)-eicosapentaenoate + AH2 + O2 = (15S)-hydroxy-(5Z,8Z,11Z,13E,17Z)-eicosapentaenoate + A + H2O. It catalyses the reaction (7Z,10Z,13Z,16Z,19Z)-docosapentaenoate + AH2 + O2 = 13R-hydroxy-(7Z,10Z,14E,16Z,19Z)-docosapentaenoate + A + H2O. The enzyme catalyses (4Z,7Z,10Z,13Z,16Z,19Z)-docosahexaenoate + AH2 + O2 = 13-hydroxy-(4Z,7Z,10Z,14E,16Z,19Z)-docosahexaenoate + A + H2O. It carries out the reaction (5S)-hydroxy-(6E,8Z,11Z,14Z)-eicosatetraenoate + AH2 + O2 = (5S,15R)-dihydroxy-(6E,8Z,11Z,13E)-eicosatetraenoate + A + H2O. The catalysed reaction is (4Z,7Z,10Z,13Z,16Z,19Z)-docosahexaenoate + AH2 + O2 = 17R-hydroxy-(4Z,7Z,10Z,13Z,15E,19Z)-docosahexaenoate + A + H2O. It catalyses the reaction (5S)-hydroxy-(6E,8Z,11Z,14Z)-eicosatetraenoate + AH2 + O2 = (5S,15S)-dihydroxy-(6E,8Z,11Z,13E)-eicosatetraenoate + A + H2O. The enzyme catalyses (5S)-hydroxy-(6E,8Z,11Z,14Z)-eicosatetraenoate + AH2 + O2 = (5S,11R)-dihydroxy-(6E,8Z,12E,14Z)-eicosatetraenoate + A + H2O. It carries out the reaction 2-(5Z,8Z,11Z,14Z-eicosatetraenoyl)-glycerol + 2 O2 = 2-glyceryl-prostaglandin G2. The catalysed reaction is 2-glyceryl-prostaglandin G2 + AH2 = 2-glyceryl-prostaglandin H2 + A + H2O. It catalyses the reaction (5Z,8Z,11Z,14Z)-eicosatetraenoate + O2 = (15R)-hydroperoxy-(5Z,8Z,11Z,13E)-eicosatetraenoate. The enzyme catalyses (5Z,8Z,11Z,14Z)-eicosatetraenoate + O2 = 11R-hydroperoxy-(5Z,8Z,12E,14Z)-eicosatetraenoate. It carries out the reaction (9Z,12Z)-octadecadienoate + AH2 + O2 = (9R)-hydroxy-(10E,12Z)-octadecadienoate + A + H2O. The catalysed reaction is (9Z,12Z)-octadecadienoate + AH2 + O2 = (9S)-hydroxy-(10E,12Z)-octadecadienoate + A + H2O. It catalyses the reaction (9Z,12Z)-octadecadienoate + AH2 + O2 = (13S)-hydroxy-(9Z,11E)-octadecadienoate + A + H2O. The enzyme catalyses (9Z,12Z)-octadecadienoate + AH2 + O2 = (13R)-hydroxy-(9Z,11E)-octadecadienoate + A + H2O. It functions in the pathway lipid metabolism; prostaglandin biosynthesis. Dual cyclooxygenase and peroxidase in the biosynthesis pathway of prostanoids, a class of C20 oxylipins mainly derived from arachidonate ((5Z,8Z,11Z,14Z)-eicosatetraenoate, AA, C20:4(n-6)), with a particular role in the inflammatory response. The cyclooxygenase activity oxygenates AA to the hydroperoxy endoperoxide prostaglandin G2 (PGG2), and the peroxidase activity reduces PGG2 to the hydroxy endoperoxide prostaglandin H2 (PGH2), the precursor of all 2-series prostaglandins and thromboxanes. This complex transformation is initiated by abstraction of hydrogen at carbon 13 (with S-stereochemistry), followed by insertion of molecular O2 to form the endoperoxide bridge between carbon 9 and 11 that defines prostaglandins. The insertion of a second molecule of O2 (bis-oxygenase activity) yields a hydroperoxy group in PGG2 that is then reduced to PGH2 by two electrons. Similarly catalyzes successive cyclooxygenation and peroxidation of dihomo-gamma-linoleate (DGLA, C20:3(n-6)) and eicosapentaenoate (EPA, C20:5(n-3)) to corresponding PGH1 and PGH3, the precursors of 1- and 3-series prostaglandins. In an alternative pathway of prostanoid biosynthesis, converts 2-arachidonoyl lysophopholipids to prostanoid lysophopholipids, which are then hydrolyzed by intracellular phospholipases to release free prostanoids. Metabolizes 2-arachidonoyl glycerol yielding the glyceryl ester of PGH2, a process that can contribute to pain response. Generates lipid mediators from n-3 and n-6 polyunsaturated fatty acids (PUFAs) via a lipoxygenase-type mechanism. Oxygenates PUFAs to hydroperoxy compounds and then reduces them to corresponding alcohols. Plays a role in the generation of resolution phase interaction products (resolvins) during both sterile and infectious inflammation. Metabolizes docosahexaenoate (DHA, C22:6(n-3)) to 17R-HDHA, a precursor of the D-series resolvins (RvDs). As a component of the biosynthetic pathway of E-series resolvins (RvEs), converts eicosapentaenoate (EPA, C20:5(n-3)) primarily to 18S-HEPE that is further metabolized by ALOX5 and LTA4H to generate 18S-RvE1 and 18S-RvE2. In vascular endothelial cells, converts docosapentaenoate (DPA, C22:5(n-3)) to 13R-HDPA, a precursor for 13-series resolvins (RvTs) shown to activate macrophage phagocytosis during bacterial infection. In activated leukocytes, contributes to oxygenation of hydroxyeicosatetraenoates (HETE) to diHETES (5,15-diHETE and 5,11-diHETE). Can also use linoleate (LA, (9Z,12Z)-octadecadienoate, C18:2(n-6)) as substrate and produce hydroxyoctadecadienoates (HODEs) in a regio- and stereospecific manner,being (9R)-HODE ((9R)-hydroxy-(10E,12Z)-octadecadienoate) and (13S)-HODE ((13S)-hydroxy-(9Z,11E)-octadecadienoate) its major products. During neuroinflammation, plays a role in neuronal secretion of specialized preresolving mediators (SPMs) 15R-lipoxin A4 that regulates phagocytic microglia. In Oryctolagus cuniculus (Rabbit), this protein is Prostaglandin G/H synthase 2 (PTGS2).